The sequence spans 128 residues: Fluoride-specific ion channel FluC (128 aa).

A run of 4 helical transmembrane segments spans residues 5–25, 34–54, 67–87, and 99–119; these read LFISCGAILGASLRWAIGLLF, FGTLIANLFGCLIIGVLLGLF, FLITGFLGSLTTFSSFSSEVV, and FCVLMMHLFGCLAMTVLGIWI. Na(+) contacts are provided by Gly-74 and Thr-77.

It belongs to the fluoride channel Fluc/FEX (TC 1.A.43) family.

It localises to the cell inner membrane. The enzyme catalyses fluoride(in) = fluoride(out). Its activity is regulated as follows. Na(+) is not transported, but it plays an essential structural role and its presence is essential for fluoride channel function. Its function is as follows. Fluoride-specific ion channel. Important for reducing fluoride concentration in the cell, thus reducing its toxicity. The chain is Fluoride-specific ion channel FluC from Haemophilus influenzae (strain PittGG).